Here is a 236-residue protein sequence, read N- to C-terminus: tRNA1(Val) (adenine(37)-N6)-methyltransferase (236 aa).

The protein belongs to the methyltransferase superfamily. tRNA (adenine-N(6)-)-methyltransferase family.

It localises to the cytoplasm. The enzyme catalyses adenosine(37) in tRNA1(Val) + S-adenosyl-L-methionine = N(6)-methyladenosine(37) in tRNA1(Val) + S-adenosyl-L-homocysteine + H(+). Its function is as follows. Specifically methylates the adenine in position 37 of tRNA(1)(Val) (anticodon cmo5UAC). The protein is tRNA1(Val) (adenine(37)-N6)-methyltransferase of Actinobacillus succinogenes (strain ATCC 55618 / DSM 22257 / CCUG 43843 / 130Z).